A 757-amino-acid chain; its full sequence is Cap-specific mRNA (nucleoside-2'-O-)-methyltransferase 1 (757 aa).

The tract at residues 1–61 is disordered; sequence MFQSNQYDEY…EDDEEEEDTP (61 aa). 2 stretches are compositionally biased toward acidic residues: residues 18–32 and 40–59; these read EENE…NENE and GDQD…EEED. A G-patch domain is found at 62–108; the sequence is KLSFGAKFLAKHGHIEGQGLGKEKDGRIDLIEVDRFQSTKGLGFAEN. A RrmJ-type SAM-dependent 2'-O-MTase domain is found at 214 to 438; sequence IFINRAAVKM…ERYIICKNFL (225 aa). The S-adenosyl-L-methionine site is built by Gly257, Glu301, and Asp352. Residue Lys392 is the Proton acceptor of the active site. The span at 538–548 shows a compositional bias: basic residues; that stretch reads HKNRQKHHHNN. A disordered region spans residues 538–670; it reads HKNRQKHHHN…NNNNNNNNKN (133 aa). Over residues 549–569 the composition is skewed to low complexity; the sequence is HSNNNNNNNNSNNNNNNNNQH. Over residues 570–581 the composition is skewed to basic residues; sequence QHQHHQHQHHQN. Positions 597-668 are enriched in low complexity; the sequence is NNNINNNSNN…NNNNNNNNNN (72 aa).

The catalysed reaction is a 5'-end (N(7)-methyl 5'-triphosphoguanosine)-ribonucleoside in mRNA + S-adenosyl-L-methionine = a 5'-end (N(7)-methyl 5'-triphosphoguanosine)-(2'-O-methyl-ribonucleoside) in mRNA + S-adenosyl-L-homocysteine + H(+). In terms of biological role, S-adenosyl-L-methionine-dependent methyltransferase that mediates mRNA cap1 2'-O-ribose methylation to the 5'-cap structure of mRNAs. Methylates the ribose of the first nucleotide of a m(7)GpppG-capped mRNA to produce m(7)GpppNmp (cap1). Cap1 modification is linked to higher levels of translation. This Dictyostelium discoideum (Social amoeba) protein is Cap-specific mRNA (nucleoside-2'-O-)-methyltransferase 1.